The chain runs to 382 residues: Galactokinase (382 aa).

E34 to D37 lines the substrate pocket. Residue G124–S130 coordinates ATP. Mg(2+) is bound by residues S130 and E162. The active-site Proton acceptor is the D174. Y223 is a substrate binding site.

It belongs to the GHMP kinase family. GalK subfamily.

It localises to the cytoplasm. It catalyses the reaction alpha-D-galactose + ATP = alpha-D-galactose 1-phosphate + ADP + H(+). Its pathway is carbohydrate metabolism; galactose metabolism. In terms of biological role, catalyzes the transfer of the gamma-phosphate of ATP to D-galactose to form alpha-D-galactose-1-phosphate (Gal-1-P). The protein is Galactokinase of Escherichia coli O9:H4 (strain HS).